A 276-amino-acid polypeptide reads, in one-letter code: Replication protein A 32 kDa subunit-A (276 aa).

The span at 19–31 (GGGGYMQSPGGFG) shows a compositional bias: gly residues. Positions 19–47 (GGGGYMQSPGGFGSPAPTQGEKKSRSRSQ) are disordered. The segment at residues 77–151 (VTIVGIVRHA…KSVVAFKIAP (75 aa)) is a DNA-binding region (OB).

It belongs to the replication factor A protein 2 family. In terms of assembly, component of the replication protein A complex (RPA/RP-A), a heterotrimeric complex composed of RPA1, RPA2 and RPA3. Post-translationally, differentially phosphorylated throughout the cell cycle, becoming phosphorylated at the G1-S transition and dephosphorylated in late mitosis. Phosphorylation increases upon replication fork stalling.

It localises to the nucleus. The protein localises to the PML body. Its function is as follows. As part of the heterotrimeric replication protein A complex (RPA/RP-A), binds and stabilizes single-stranded DNA intermediates, that form during DNA replication or upon DNA stress. It prevents their reannealing and in parallel, recruits and activates different proteins and complexes involved in DNA metabolism. Thereby, it plays an essential role both in DNA replication and the cellular response to DNA damage. This chain is Replication protein A 32 kDa subunit-A (rpa2-a), found in Xenopus laevis (African clawed frog).